The following is a 497-amino-acid chain: uncharacterized protein (497 aa).

2 ABC transporter domains span residues valine 9–alanine 247 and alanine 256–alanine 496. An ATP-binding site is contributed by glycine 41–serine 48.

The protein belongs to the ABC transporter superfamily. Ribose importer (TC 3.A.1.2.1) family.

It localises to the cell membrane. Its function is as follows. Probably part of the binding-protein-dependent transport system y4mIJK. This system probably transports a sugar. Probably responsible for energy coupling to the transport system. This is an uncharacterized protein from Sinorhizobium fredii (strain NBRC 101917 / NGR234).